A 1133-amino-acid chain; its full sequence is MSSLSRELVFLILQFLDEEKFKETVHKLEQESAFYFNMKHFEDLVQGGEWDEVEKYLSGFTKVEDNRYSMKIFFEIRKQKYLEALDRHDRAKAVEILVKDLKVFASFNEELFKEITQLLTLENFRQNEQLSKYGDTKSARNIMLMELKKLIEANPLFRDKLNFPPFKVSRLRTLINQSLNWQHQLCKNPRPNPDIKTLFTDHSCAAPTNGARAPPPANGPLVGPIPKSAAFPPMGAHAPFQPVVSPSPNAIAGWMTNANPSLPHAAVAQGPPGLVQPPNTAAFLKHPRTPTSAPAIDYQSADSEHLMKRMRVGQPDEVSFSGASHPANIYTQDDLPKQVVRNLNQGSNVMSLDFHPVQQTILLVGTNVGDIGIWEVGSRERIAHKTFKVWDISSCTLPLQAALMKDAAISVNRCLWSPDGSILGVAFSKHIVQTYAFVLNGELRQQAEIDAHIGGVNDIAFSHPNKTLSIITCGDDKLIKVWDAQTGQKQYTFEGHEAPVYSVCPHYKESIQFIFSTAIDGKIKAWLYDCLGSRVDYDAPGHWCTTMAYSADGTRLFSCGTSKDGDSHLVEWNETEGAIKRTYNGFRKRSLGVVQFDTTRNRFLAAGDEFVVKFWDMDNTNILTTTDCDGGLPASPRLRFNREGSLLAVTANENGIKILANTDGQRLLRMLESRAYEGSRGPPQQINTKPPIVNTLGSVSNVSSPMAVNSERPDRALPTVSMSGLAPMDVSRTPDVKPRITDESEKVKTWKLADIGDSGHLRALRMPDTSATSSKVVRLLYTNNGVALLALGSNAVHKLWKWQRTDRNPNGKSTASFTPQMWQPANGILMANDTSDGNPEEATACIALSKNDSYVMSASGGKVSLFNMMTFKVMTTFMAPPPAATFLAFHPQDNNIIAIGMEDSTIQIYNVRVDEVKSKLKGHSKKITGLAFSQSMNMLVSSGADAQLCAWSIDGWEKKKSRYIQSPANRSGALVGDTRVQFHNDQTHILVVHESQLAIYDAKLECLRSWSPREALPAPISSAIYSCDGLLIYAGFCDGAIGVFEAESLRLRCRIAPSAYIPPSMSSGGSVYPMVVAAHPLEPNQIAVGMSDGAVHVVEPLDSDPKWGVAPPQDNGTHPTISAAPAAANKPEV.

One can recognise a LisH domain in the interval 4-36 (LSRELVFLILQFLDEEKFKETVHKLEQESAFYF). The region spanning 34–92 (FYFNMKHFEDLVQGGEWDEVEKYLSGFTKVEDNRYSMKIFFEIRKQKYLEALDRHDRAK) is the CTLH domain. 12 WD repeats span residues 344–384 (NQGS…RIAH), 451–492 (AHIG…KQYT), 495–536 (GHEA…SRVD), 539–582 (APGH…IKRT), 586–625 (FRKR…ILTT), 630–669 (GGLP…RLLR), 771–810 (ATSS…RNPN), 838–876 (NPEE…VMTT), 879–919 (APPP…VKSK), 922–961 (GHSK…KKKS), 970–1011 (RSGA…RSWS), and 1015–1054 (ALPA…LRCR). The segment at 1102–1133 (DSDPKWGVAPPQDNGTHPTISAAPAAANKPEV) is disordered.

Tetramer. Interacts with D53, probably via the EAR motifs. Binds to AP2-1/TOE1, AP2-3/SNB and AP2-2/IDS1. Interacts with WOX1. Interacts with MOF1. Expressed in stems and panicles. Detected in roots, seeds, leaves and sheath. Expressed in the meristem and lateral organ primordia.

The protein localises to the nucleus. Its function is as follows. Transcriptional corepressor involved in branch formation regulation, presumably by suppressing primary branch formation and promoting secondary branch formation. Required for the cell elongation in the first internode and pollen development. Probable downstream regulator of strigolactones signaling important in axillary meristem maintenance. Acts in auxin signaling and is associated with the regulation of histone deacetylation. Essential for the function of miR172 microRNA and its target genes in regulating panicle development. This is Protein TOPLESS-RELATED PROTEIN 2 from Oryza sativa subsp. japonica (Rice).